The following is a 403-amino-acid chain: cAMP-dependent protein kinase regulatory subunit (403 aa).

Residues 1 to 155 (MADYTIPSEL…RIQASIGNNF (155 aa)) form a dimerization and phosphorylation region. The interval 79-125 (YAYSTDDGFGTEDDDDDDDDEDDEAAIPPPVVNRGRRTSVSAESMAP) is disordered. Acidic residues predominate over residues 87-103 (FGTEDDDDDDDDEDDEA). Ser-117 bears the Phosphoserine mark. 3',5'-cyclic AMP is bound by residues 156-278 (LFRN…EEVP), Glu-226, Arg-235, 279-403 (LLSS…PGEH), Glu-349, and Arg-358.

Belongs to the cAMP-dependent kinase regulatory chain family. In terms of assembly, tetramer, composed of 2 regulatory (R) and 2 catalytic (C) subunits. In the presence of cAMP it dissociates into 2 active monomeric C subunits and an R dimer that binds four cAMP molecules.

This chain is cAMP-dependent protein kinase regulatory subunit (PKAR), found in Blastocladiella emersonii (Aquatic fungus).